The following is a 524-amino-acid chain: Probable lipid II flippase MurJ (524 aa).

The next 13 helical transmembrane spans lie at 44 to 64 (IFGAGMATDAFFVAFKLPNLL), 103 to 123 (LLTLALAVVTVAGMLAAPWVI), 146 to 166 (ITFPYILLISLASLVGAILNT), 172 to 192 (IPAFAPTFLNISMIGFALFAA), 195 to 215 (FNPPVLALAWAVTVGGVLQLV), 250 to 270 (ILGVSVSQISLIINTIFASFL), 284 to 304 (LMEFPSGVLGVALGTILLPSL), 322 to 342 (WGLRLCFLLALPSAVALGILA), 367 to 387 (LIAYSVGLIGLIVVKVLAPGF), 396 to 416 (PVKIAIVTLIMTQLMNLAFIG), 420 to 440 (HAGLSLSIGLAACLNASLLYW), 456 to 476 (WFLMRLIISVLVMAAVLFGVL), and 494 to 514 (LMAVVIAGIAAYFAALAVLGF).

The protein belongs to the MurJ/MviN family.

It is found in the cell inner membrane. It functions in the pathway cell wall biogenesis; peptidoglycan biosynthesis. Functionally, involved in peptidoglycan biosynthesis. Transports lipid-linked peptidoglycan precursors from the inner to the outer leaflet of the cytoplasmic membrane. This Salmonella typhimurium (strain LT2 / SGSC1412 / ATCC 700720) protein is Probable lipid II flippase MurJ.